Consider the following 142-residue polypeptide: Large ribosomal subunit protein bL19 (142 aa).

It belongs to the bacterial ribosomal protein bL19 family.

Its function is as follows. This protein is located at the 30S-50S ribosomal subunit interface and may play a role in the structure and function of the aminoacyl-tRNA binding site. The protein is Large ribosomal subunit protein bL19 of Psychrobacter cryohalolentis (strain ATCC BAA-1226 / DSM 17306 / VKM B-2378 / K5).